The primary structure comprises 542 residues: Beta-fructofuranosidase, insoluble isoenzyme 5 (542 aa).

Residues 50 to 53, Q69, W77, and 114 to 115 contribute to the substrate site; these read WQND and WS. Residue D53 is part of the active site. N-linked (GlcNAc...) asparagine glycosylation occurs at N142. Substrate-binding positions include 178-179 and E233; that span reads RD. A disulfide bridge links C389 with C436. 2 N-linked (GlcNAc...) asparagine glycosylation sites follow: N510 and N516.

It belongs to the glycosyl hydrolase 32 family. Expressed in roots and leaves.

It localises to the secreted. It is found in the extracellular space. The protein localises to the apoplast. The protein resides in the cell wall. It carries out the reaction Hydrolysis of terminal non-reducing beta-D-fructofuranoside residues in beta-D-fructofuranosides.. Its function is as follows. May play a role in stress response. The polypeptide is Beta-fructofuranosidase, insoluble isoenzyme 5 (CIN5) (Oryza sativa subsp. japonica (Rice)).